A 217-amino-acid chain; its full sequence is Large ribosomal subunit protein uL1 (217 aa).

This sequence belongs to the universal ribosomal protein uL1 family.

The polypeptide is Large ribosomal subunit protein uL1 (RPL10A) (Eremothecium gossypii (strain ATCC 10895 / CBS 109.51 / FGSC 9923 / NRRL Y-1056) (Yeast)).